The following is a 182-amino-acid chain: Testis-expressed protein 29 (182 aa).

Residues 1 to 56 lie on the Extracellular side of the membrane; the sequence is MRYTTDIKKSPPQLLKTFAVCDISLYDICDYNVTRDQCKELGCCFYKGVCYKKVVP. A helical transmembrane segment spans residues 57-77; that stretch reads IYVQMFSTLIVLVTGIIIITI. Residues 78 to 182 are Cytoplasmic-facing; sequence IYRIVQEIKR…PPTDPSENPP (105 aa). The tract at residues 91–182 is disordered; sequence LSMNSTPKAS…PPTDPSENPP (92 aa). Residues 115-170 show a composition bias toward low complexity; the sequence is RAPSRSPSRTSSTLSSRSPTTAPTTAPTTDPATDPATDPATDPATDPATDPATDPA. Over residues 171-182 the composition is skewed to pro residues; that stretch reads TAPPTDPSENPP.

The protein localises to the membrane. This Rattus norvegicus (Rat) protein is Testis-expressed protein 29 (Tex29).